The chain runs to 394 residues: S-adenosylmethionine synthase 2 (394 aa).

Glutamate 11 contacts Mg(2+). Histidine 17 is a binding site for ATP. Glutamate 45 provides a ligand contact to K(+). The L-methionine site is built by glutamate 58 and glutamine 101. ATP contacts are provided by residues 169–171 (DGK), 237–240 (SGRF), aspartate 248, 254–255 (RK), alanine 271, lysine 275, and lysine 279. Position 248 (aspartate 248) interacts with L-methionine. Lysine 279 contributes to the L-methionine binding site.

Belongs to the AdoMet synthase family. In terms of assembly, homotetramer. Mn(2+) serves as cofactor. Mg(2+) is required as a cofactor. Requires Co(2+) as cofactor. The cofactor is K(+).

The protein localises to the cytoplasm. The enzyme catalyses L-methionine + ATP + H2O = S-adenosyl-L-methionine + phosphate + diphosphate. It participates in amino-acid biosynthesis; S-adenosyl-L-methionine biosynthesis; S-adenosyl-L-methionine from L-methionine: step 1/1. Catalyzes the formation of S-adenosylmethionine from methionine and ATP. The reaction comprises two steps that are both catalyzed by the same enzyme: formation of S-adenosylmethionine (AdoMet) and triphosphate, and subsequent hydrolysis of the triphosphate. The chain is S-adenosylmethionine synthase 2 (SAM2) from Hordeum vulgare (Barley).